We begin with the raw amino-acid sequence, 459 residues long: uncharacterized protein (459 aa).

Residues Lys9 to Lys67 form the TRAM domain. Residues Cys80, Cys86, Cys89, and Cys168 each coordinate [4Fe-4S] cluster. Gln292, Tyr321, Asp342, and Asp390 together coordinate S-adenosyl-L-methionine. The Nucleophile role is filled by Cys417.

The protein belongs to the class I-like SAM-binding methyltransferase superfamily. RNA M5U methyltransferase family.

This is an uncharacterized protein from Bacillus anthracis.